The sequence spans 498 residues: ATP synthase subunit beta, chloroplastic (498 aa).

172–179 lines the ATP pocket; that stretch reads GGAGVGKT.

This sequence belongs to the ATPase alpha/beta chains family. As to quaternary structure, F-type ATPases have 2 components, CF(1) - the catalytic core - and CF(0) - the membrane proton channel. CF(1) has five subunits: alpha(3), beta(3), gamma(1), delta(1), epsilon(1). CF(0) has four main subunits: a(1), b(1), b'(1) and c(9-12).

It localises to the plastid. The protein resides in the chloroplast thylakoid membrane. The enzyme catalyses ATP + H2O + 4 H(+)(in) = ADP + phosphate + 5 H(+)(out). In terms of biological role, produces ATP from ADP in the presence of a proton gradient across the membrane. The catalytic sites are hosted primarily by the beta subunits. The sequence is that of ATP synthase subunit beta, chloroplastic from Nicotiana bigelovii (Bigelov's tobacco).